A 423-amino-acid polypeptide reads, in one-letter code: Phosphoribosylamine--glycine ligase (423 aa).

The 208-residue stretch at 107-314 (KAFMAKYNIP…LSDLVEAAID (208 aa)) folds into the ATP-grasp domain. 133-194 (VNQKGAPIVI…EDFLQGEEAS (62 aa)) is an ATP binding site. Mg(2+)-binding residues include Glu-284 and Asn-286.

It belongs to the GARS family. Mg(2+) is required as a cofactor. Requires Mn(2+) as cofactor.

The catalysed reaction is 5-phospho-beta-D-ribosylamine + glycine + ATP = N(1)-(5-phospho-beta-D-ribosyl)glycinamide + ADP + phosphate + H(+). The protein operates within purine metabolism; IMP biosynthesis via de novo pathway; N(1)-(5-phospho-D-ribosyl)glycinamide from 5-phospho-alpha-D-ribose 1-diphosphate: step 2/2. The chain is Phosphoribosylamine--glycine ligase from Neisseria meningitidis serogroup A / serotype 4A (strain DSM 15465 / Z2491).